A 307-amino-acid chain; its full sequence is Coproporphyrin III ferrochelatase (307 aa).

Residues tyrosine 12, arginine 29, 45–46 (RY), serine 53, and tyrosine 124 each bind Fe-coproporphyrin III. Positions 181 and 263 each coordinate Fe(2+).

This sequence belongs to the ferrochelatase family.

It is found in the cytoplasm. It carries out the reaction Fe-coproporphyrin III + 2 H(+) = coproporphyrin III + Fe(2+). It participates in porphyrin-containing compound metabolism; protoheme biosynthesis. In terms of biological role, involved in coproporphyrin-dependent heme b biosynthesis. Catalyzes the insertion of ferrous iron into coproporphyrin III to form Fe-coproporphyrin III. In Staphylococcus epidermidis (strain ATCC 35984 / DSM 28319 / BCRC 17069 / CCUG 31568 / BM 3577 / RP62A), this protein is Coproporphyrin III ferrochelatase.